The sequence spans 118 residues: MPRVKRGFKARRRRNKVLKLAKGYRGARSKLFRSATEAVDRALNYAFRDRRVKKRDFRALWIARINASARENGLSYSRLVHGLKKAEIALDRKILAELAVTDPAGFTAIADKAKAQLQ.

It belongs to the bacterial ribosomal protein bL20 family.

Functionally, binds directly to 23S ribosomal RNA and is necessary for the in vitro assembly process of the 50S ribosomal subunit. It is not involved in the protein synthesizing functions of that subunit. The chain is Large ribosomal subunit protein bL20 from Syntrophotalea carbinolica (strain DSM 2380 / NBRC 103641 / GraBd1) (Pelobacter carbinolicus).